The chain runs to 240 residues: Probable peptide export permease protein YydJ (240 aa).

The next 6 helical transmembrane spans lie at 13 to 33 (VIII…FLLV), 50 to 70 (SYTV…AFFI), 97 to 117 (IAVL…IISL), 126 to 146 (ALLL…IGTI), 153 to 173 (ILIS…LVAI), and 210 to 230 (VLFI…VLRF).

In terms of assembly, the complex is composed of 2 ATP-binding proteins (YydI), two transmembrane proteins (YydJ).

It localises to the cell membrane. Functionally, suggested to be part of an ABC transporter complex YydIJ involved in export of the modified peptide YydF. This Bacillus subtilis (strain 168) protein is Probable peptide export permease protein YydJ (yydJ).